Here is a 154-residue protein sequence, read N- to C-terminus: uncharacterized protein (154 aa).

The N-terminal 42 residues, 1 to 42 (MLRVIWKHSSRVTRSIELSNISTTNHTRSLRRLSWISPRRFY), are a transit peptide targeting the mitochondrion.

The protein resides in the mitochondrion. This is an uncharacterized protein from Saccharomyces cerevisiae (strain ATCC 204508 / S288c) (Baker's yeast).